We begin with the raw amino-acid sequence, 43 residues long: Protein PsbN (43 aa).

A helical membrane pass occupies residues 5 to 27; it reads TLIAIFISCSLVSFTGYALYTAF.

The protein belongs to the PsbN family.

It localises to the plastid. The protein resides in the chloroplast thylakoid membrane. In terms of biological role, may play a role in photosystem I and II biogenesis. The chain is Protein PsbN from Lopidium concinnum (Moss).